We begin with the raw amino-acid sequence, 579 residues long: Tyrosine 3-monooxygenase (579 aa).

Acidic residues predominate over residues valine 105–glutamine 114. Residues valine 105–aspartate 132 are disordered. Fe cation-binding residues include histidine 409, histidine 414, and glutamate 454.

The protein belongs to the biopterin-dependent aromatic amino acid hydroxylase family. Fe(2+) is required as a cofactor.

The protein localises to the cytoplasm. It localises to the perinuclear region. Its subcellular location is the cell projection. It is found in the axon. The enzyme catalyses (6R)-L-erythro-5,6,7,8-tetrahydrobiopterin + L-tyrosine + O2 = (4aS,6R)-4a-hydroxy-L-erythro-5,6,7,8-tetrahydrobiopterin + L-dopa. Its pathway is catecholamine biosynthesis; dopamine biosynthesis; dopamine from L-tyrosine: step 1/2. Phosphorylation leads to an increase in the catalytic activity. Plays an important role in the physiology of adrenergic neurons. The polypeptide is Tyrosine 3-monooxygenase (ple) (Drosophila melanogaster (Fruit fly)).